Here is a 273-residue protein sequence, read N- to C-terminus: Cytosolic sulfotransferase 4 (273 aa).

Residue 74–79 participates in 3'-phosphoadenylyl sulfate binding; the sequence is KCGTTW. His121 (proton acceptor) is an active-site residue. 3'-phosphoadenylyl sulfate-binding positions include Arg143 and 239 to 241; that span reads RKG.

The protein belongs to the sulfotransferase 1 family.

Its subcellular location is the cytoplasm. Sulfotransferase that utilizes 3'-phospho-5'-adenylyl sulfate (PAPS) as sulfonate donor. The protein is Cytosolic sulfotransferase 4 (SOT4) of Arabidopsis thaliana (Mouse-ear cress).